We begin with the raw amino-acid sequence, 131 residues long: Small ribosomal subunit protein uS11 (131 aa).

This sequence belongs to the universal ribosomal protein uS11 family. Part of the 30S ribosomal subunit. Interacts with proteins S7 and S18. Binds to IF-3.

Located on the platform of the 30S subunit, it bridges several disparate RNA helices of the 16S rRNA. Forms part of the Shine-Dalgarno cleft in the 70S ribosome. The polypeptide is Small ribosomal subunit protein uS11 (Trichodesmium erythraeum (strain IMS101)).